The sequence spans 143 residues: Ribosome-binding factor A (143 aa).

A disordered region spans residues 123 to 143 (VRAQAAQAKPAGEANPYKERN). The span at 124 to 136 (RAQAAQAKPAGEA) shows a compositional bias: low complexity.

It belongs to the RbfA family. As to quaternary structure, monomer. Binds 30S ribosomal subunits, but not 50S ribosomal subunits or 70S ribosomes.

The protein resides in the cytoplasm. Its function is as follows. One of several proteins that assist in the late maturation steps of the functional core of the 30S ribosomal subunit. Associates with free 30S ribosomal subunits (but not with 30S subunits that are part of 70S ribosomes or polysomes). Required for efficient processing of 16S rRNA. May interact with the 5'-terminal helix region of 16S rRNA. In Corynebacterium urealyticum (strain ATCC 43042 / DSM 7109), this protein is Ribosome-binding factor A.